A 396-amino-acid chain; its full sequence is Probable splicing factor YJU2B (396 aa).

Positions 1 to 26 are disordered; it reads MGERKGVNKYYPPDFNPEKHGSLNRY. At serine 40 the chain carries Phosphoserine. A coiled-coil region spans residues 182–214; that stretch reads LNSMLRRRFREKKKAIQEEEERDQALQAKASLT. Residues 295 to 396 form a disordered region; the sequence is IVRRRSRDVP…VADYSDSESE (102 aa). At serine 306 the chain carries Phosphoserine. A compositionally biased stretch (basic and acidic residues) spans 315 to 327; the sequence is KSGEPRVPEEAAQ. Residues 340 to 350 show a composition bias toward polar residues; that stretch reads TTETPKCSSPR. Serine 362 is subject to Phosphoserine.

This sequence belongs to the CWC16 family.

It is found in the nucleus. May be involved in mRNA splicing. The polypeptide is Probable splicing factor YJU2B (Homo sapiens (Human)).